We begin with the raw amino-acid sequence, 1391 residues long: DNA-directed RNA polymerase subunit beta' (1391 aa).

4 residues coordinate Zn(2+): C70, C72, C85, and C88. Positions 461, 463, and 465 each coordinate Mg(2+). Zn(2+)-binding residues include C809, C882, C889, and C892.

Belongs to the RNA polymerase beta' chain family. As to quaternary structure, the RNAP catalytic core consists of 2 alpha, 1 beta, 1 beta' and 1 omega subunit. When a sigma factor is associated with the core the holoenzyme is formed, which can initiate transcription. Requires Mg(2+) as cofactor. The cofactor is Zn(2+).

The enzyme catalyses RNA(n) + a ribonucleoside 5'-triphosphate = RNA(n+1) + diphosphate. DNA-dependent RNA polymerase catalyzes the transcription of DNA into RNA using the four ribonucleoside triphosphates as substrates. In Zymomonas mobilis subsp. mobilis (strain ATCC 31821 / ZM4 / CP4), this protein is DNA-directed RNA polymerase subunit beta'.